Reading from the N-terminus, the 222-residue chain is Orotidine 5'-phosphate decarboxylase (222 aa).

Residues D11, K30, 59–68 (DFKLADIGYI), S115, 164–174 (PGMGSQGGSYG), G187, and R188 contribute to the substrate site. K61 acts as the Proton donor in catalysis.

It belongs to the OMP decarboxylase family. Type 1 subfamily. As to quaternary structure, homodimer.

It catalyses the reaction orotidine 5'-phosphate + H(+) = UMP + CO2. It participates in pyrimidine metabolism; UMP biosynthesis via de novo pathway; UMP from orotate: step 2/2. Functionally, catalyzes the decarboxylation of orotidine 5'-monophosphate (OMP) to uridine 5'-monophosphate (UMP). In Saccharolobus solfataricus (strain ATCC 35092 / DSM 1617 / JCM 11322 / P2) (Sulfolobus solfataricus), this protein is Orotidine 5'-phosphate decarboxylase.